An 86-amino-acid chain; its full sequence is Long neurotoxin homolog (86 aa).

Positions 1–21 (MKTLLLTLVVVTIVCLALGYT) are cleaved as a signal peptide. Cystine bridges form between Cys24–Cys45, Cys27–Cys32, Cys38–Cys63, Cys67–Cys78, and Cys79–Cys84.

It belongs to the three-finger toxin family. Ancestral subfamily. Orphan group II sub-subfamily. In terms of tissue distribution, expressed by the venom gland.

It localises to the secreted. In terms of biological role, binds with low affinity and weakly inhibits muscle nicotinic acetylcholine receptor (nAChR). The sequence is that of Long neurotoxin homolog from Naja atra (Chinese cobra).